The primary structure comprises 416 residues: 3-oxoacyl-[acyl-carrier-protein] synthase 1 (416 aa).

Positions 11–415 constitute a Ketosynthase family 3 (KS3) domain; the sequence is FPSVVVTAVT…GHNVALAFGR (405 aa). Catalysis depends on for beta-ketoacyl synthase activity residues Cys-171, His-311, and His-345. 2 residues coordinate substrate: His-311 and His-345.

The protein belongs to the thiolase-like superfamily. Beta-ketoacyl-ACP synthases family.

It localises to the cytoplasm. The catalysed reaction is an ultra-long-chain mono-unsaturated fatty acyl-[ACP] + malonyl-[ACP] + H(+) = a 3-oxo-ultra-long-chain mono-unsaturated fatty acyl-[ACP] + holo-[ACP] + CO2. Its pathway is lipid metabolism; mycolic acid biosynthesis. Part of the mycobacterial fatty acid elongation system FAS-II, which is involved in mycolic acid biosynthesis. Catalyzes the elongation of long chain acyl-ACP substrates by the addition of two carbons from malonyl-ACP to an acyl acceptor. Involved in the initial extension of the mycolate chain and forms monounsaturated fatty acids that averaged 40 carbons in length. This Mycobacterium leprae (strain TN) protein is 3-oxoacyl-[acyl-carrier-protein] synthase 1 (kasA).